A 600-amino-acid polypeptide reads, in one-letter code: Proline--tRNA ligase (600 aa).

This sequence belongs to the class-II aminoacyl-tRNA synthetase family. ProS type 1 subfamily. As to quaternary structure, homodimer.

The protein resides in the cytoplasm. The enzyme catalyses tRNA(Pro) + L-proline + ATP = L-prolyl-tRNA(Pro) + AMP + diphosphate. Functionally, catalyzes the attachment of proline to tRNA(Pro) in a two-step reaction: proline is first activated by ATP to form Pro-AMP and then transferred to the acceptor end of tRNA(Pro). As ProRS can inadvertently accommodate and process non-cognate amino acids such as alanine and cysteine, to avoid such errors it has two additional distinct editing activities against alanine. One activity is designated as 'pretransfer' editing and involves the tRNA(Pro)-independent hydrolysis of activated Ala-AMP. The other activity is designated 'posttransfer' editing and involves deacylation of mischarged Ala-tRNA(Pro). The misacylated Cys-tRNA(Pro) is not edited by ProRS. The sequence is that of Proline--tRNA ligase from Acaryochloris marina (strain MBIC 11017).